Reading from the N-terminus, the 386-residue chain is Galactokinase (386 aa).

35–38 (EHTD) is a substrate binding site. Residue 125-131 (GAGLSSS) coordinates ATP. The Mg(2+) site is built by Ser131 and Glu163. The active-site Proton acceptor is Asp175. Tyr224 serves as a coordination point for substrate.

The protein belongs to the GHMP kinase family. GalK subfamily.

It is found in the cytoplasm. The enzyme catalyses alpha-D-galactose + ATP = alpha-D-galactose 1-phosphate + ADP + H(+). Its pathway is carbohydrate metabolism; galactose metabolism. In terms of biological role, catalyzes the transfer of the gamma-phosphate of ATP to D-galactose to form alpha-D-galactose-1-phosphate (Gal-1-P). This Vibrio cholerae serotype O1 (strain ATCC 39315 / El Tor Inaba N16961) protein is Galactokinase.